The following is a 100-amino-acid chain: Large ribosomal subunit protein eL30 (100 aa).

It belongs to the eukaryotic ribosomal protein eL30 family.

The protein is Large ribosomal subunit protein eL30 of Thermococcus sibiricus (strain DSM 12597 / MM 739).